Here is a 129-residue protein sequence, read N- to C-terminus: Glycine cleavage system H protein (129 aa).

The Lipoyl-binding domain maps to 24-106 (HAVVGITDFA…YDGGWLFKLA (83 aa)). At Lys65 the chain carries N6-lipoyllysine.

It belongs to the GcvH family. As to quaternary structure, the glycine cleavage system is composed of four proteins: P, T, L and H. (R)-lipoate is required as a cofactor.

The glycine cleavage system catalyzes the degradation of glycine. The H protein shuttles the methylamine group of glycine from the P protein to the T protein. The polypeptide is Glycine cleavage system H protein (Hydrogenovibrio crunogenus (strain DSM 25203 / XCL-2) (Thiomicrospira crunogena)).